A 191-amino-acid polypeptide reads, in one-letter code: Potassium-transporting ATPase KdpC subunit (191 aa).

The chain crosses the membrane as a helical span at residues 13–35 (VLFTGLCGLAYPLAITGVAQAVL). Residues 112–132 (SGPVPADAVTSSASGLDPDIS) form a disordered region.

It belongs to the KdpC family. In terms of assembly, the system is composed of three essential subunits: KdpA, KdpB and KdpC.

The protein localises to the cell inner membrane. Its function is as follows. Part of the high-affinity ATP-driven potassium transport (or Kdp) system, which catalyzes the hydrolysis of ATP coupled with the electrogenic transport of potassium into the cytoplasm. This subunit acts as a catalytic chaperone that increases the ATP-binding affinity of the ATP-hydrolyzing subunit KdpB by the formation of a transient KdpB/KdpC/ATP ternary complex. This is Potassium-transporting ATPase KdpC subunit from Allorhizobium ampelinum (strain ATCC BAA-846 / DSM 112012 / S4) (Agrobacterium vitis (strain S4)).